The sequence spans 422 residues: Dihydroorotase (422 aa).

Zn(2+)-binding residues include H59 and H61. Residues 61-63 (HFR) and N93 each bind substrate. D150, H177, and H230 together coordinate Zn(2+). A substrate-binding site is contributed by N276. D303 contributes to the Zn(2+) binding site. The active site involves D303. Residue H307 participates in substrate binding.

Belongs to the metallo-dependent hydrolases superfamily. DHOase family. Class I DHOase subfamily. Zn(2+) is required as a cofactor.

The catalysed reaction is (S)-dihydroorotate + H2O = N-carbamoyl-L-aspartate + H(+). It participates in pyrimidine metabolism; UMP biosynthesis via de novo pathway; (S)-dihydroorotate from bicarbonate: step 3/3. In terms of biological role, catalyzes the reversible cyclization of carbamoyl aspartate to dihydroorotate. The chain is Dihydroorotase from Streptococcus pyogenes serotype M1.